Here is a 94-residue protein sequence, read N- to C-terminus: Co-chaperonin GroES (94 aa).

This sequence belongs to the GroES chaperonin family. In terms of assembly, heptamer of 7 subunits arranged in a ring. Interacts with the chaperonin GroEL.

The protein localises to the cytoplasm. Together with the chaperonin GroEL, plays an essential role in assisting protein folding. The GroEL-GroES system forms a nano-cage that allows encapsulation of the non-native substrate proteins and provides a physical environment optimized to promote and accelerate protein folding. GroES binds to the apical surface of the GroEL ring, thereby capping the opening of the GroEL channel. The chain is Co-chaperonin GroES from Ruminiclostridium cellulolyticum (strain ATCC 35319 / DSM 5812 / JCM 6584 / H10) (Clostridium cellulolyticum).